A 511-amino-acid chain; its full sequence is Cobyric acid synthase (511 aa).

The GATase cobBQ-type domain maps to 251–443 (LLDIAIICLP…IHGIFDNDIF (193 aa)). The Nucleophile role is filled by cysteine 332. The active site involves histidine 435.

It belongs to the CobB/CobQ family. CobQ subfamily.

It participates in cofactor biosynthesis; adenosylcobalamin biosynthesis. Functionally, catalyzes amidations at positions B, D, E, and G on adenosylcobyrinic A,C-diamide. NH(2) groups are provided by glutamine, and one molecule of ATP is hydrogenolyzed for each amidation. This is Cobyric acid synthase from Listeria welshimeri serovar 6b (strain ATCC 35897 / DSM 20650 / CCUG 15529 / CIP 8149 / NCTC 11857 / SLCC 5334 / V8).